A 728-amino-acid polypeptide reads, in one-letter code: 1,4-alpha-glucan branching enzyme GlgB (728 aa).

Asp405 (nucleophile) is an active-site residue. Glu458 (proton donor) is an active-site residue.

It belongs to the glycosyl hydrolase 13 family. GlgB subfamily. In terms of assembly, monomer.

It catalyses the reaction Transfers a segment of a (1-&gt;4)-alpha-D-glucan chain to a primary hydroxy group in a similar glucan chain.. The protein operates within glycan biosynthesis; glycogen biosynthesis. Catalyzes the formation of the alpha-1,6-glucosidic linkages in glycogen by scission of a 1,4-alpha-linked oligosaccharide from growing alpha-1,4-glucan chains and the subsequent attachment of the oligosaccharide to the alpha-1,6 position. This is 1,4-alpha-glucan branching enzyme GlgB from Shigella flexneri.